Consider the following 418-residue polypeptide: Tryptophan synthase beta chain (418 aa).

Over residues 1-12 the composition is skewed to polar residues; that stretch reads MTSTLPTANTPD. Positions 1–21 are disordered; sequence MTSTLPTANTPDPASLMPSVR. Lys111 carries the post-translational modification N6-(pyridoxal phosphate)lysine.

This sequence belongs to the TrpB family. In terms of assembly, tetramer of two alpha and two beta chains. Pyridoxal 5'-phosphate serves as cofactor.

It catalyses the reaction (1S,2R)-1-C-(indol-3-yl)glycerol 3-phosphate + L-serine = D-glyceraldehyde 3-phosphate + L-tryptophan + H2O. It participates in amino-acid biosynthesis; L-tryptophan biosynthesis; L-tryptophan from chorismate: step 5/5. The beta subunit is responsible for the synthesis of L-tryptophan from indole and L-serine. This Synechococcus sp. (strain CC9311) protein is Tryptophan synthase beta chain.